The sequence spans 137 residues: Nucleoside diphosphate kinase (137 aa).

Lysine 9, phenylalanine 57, arginine 85, threonine 91, arginine 102, and asparagine 112 together coordinate ATP. Catalysis depends on histidine 115, which acts as the Pros-phosphohistidine intermediate.

This sequence belongs to the NDK family. In terms of assembly, homotetramer. Mg(2+) serves as cofactor.

It is found in the cytoplasm. The catalysed reaction is a 2'-deoxyribonucleoside 5'-diphosphate + ATP = a 2'-deoxyribonucleoside 5'-triphosphate + ADP. It catalyses the reaction a ribonucleoside 5'-diphosphate + ATP = a ribonucleoside 5'-triphosphate + ADP. Functionally, major role in the synthesis of nucleoside triphosphates other than ATP. The ATP gamma phosphate is transferred to the NDP beta phosphate via a ping-pong mechanism, using a phosphorylated active-site intermediate. This chain is Nucleoside diphosphate kinase, found in Sulfurovum sp. (strain NBC37-1).